The following is a 127-amino-acid chain: UPF0166 protein PH1503 (127 aa).

This sequence belongs to the UPF0166 family.

This is UPF0166 protein PH1503 from Pyrococcus horikoshii (strain ATCC 700860 / DSM 12428 / JCM 9974 / NBRC 100139 / OT-3).